Consider the following 203-residue polypeptide: Outer-membrane lipoprotein LolB (203 aa).

Residues 1 to 18 (MTLRSFLILLLSSIVLAG) form the signal peptide. Cysteine 19 carries the N-palmitoyl cysteine lipid modification. Cysteine 19 carries S-diacylglycerol cysteine lipidation.

Belongs to the LolB family. Monomer.

The protein resides in the cell outer membrane. Plays a critical role in the incorporation of lipoproteins in the outer membrane after they are released by the LolA protein. This chain is Outer-membrane lipoprotein LolB, found in Vibrio campbellii (strain ATCC BAA-1116).